The following is a 105-amino-acid chain: Resistin-like beta (105 aa).

Residues 1-23 form the signal peptide; it reads MKPTLCFLFILVSLFPLIVPGNA. Cystine bridges form between cysteine 49–cysteine 102, cysteine 61–cysteine 101, cysteine 70–cysteine 87, cysteine 72–cysteine 89, and cysteine 76–cysteine 91.

The protein belongs to the resistin/FIZZ family. Homodimer; disulfide-linked. Heterodimer with RETNLG. As to expression, strongly expressed in colon, and at lower levels in ileum. In colon, found throughout the crypt and surface epithelium and in goblet cells (at protein level). Specific to the gastrointestinal tract; not detected in other tissues tested.

The protein resides in the secreted. Its function is as follows. Probable hormone. In Mus musculus (Mouse), this protein is Resistin-like beta (Retnlb).